The primary structure comprises 1254 residues: DNA polymerase gamma (1254 aa).

Residues 1125-1137 show a composition bias toward basic and acidic residues; sequence RKKENRIDDENKK. Disordered stretches follow at residues 1125-1145 and 1202-1240; these read RKKE…KKNT and YKKK…TNRN. The segment covering 1208–1217 has biased composition (polar residues); the sequence is QARTASSSPI. The segment covering 1219 to 1231 has biased composition (basic residues); it reads KTAKAVHSKKLPA.

It belongs to the DNA polymerase type-A family. Requires Mg(2+) as cofactor.

It is found in the mitochondrion. The catalysed reaction is DNA(n) + a 2'-deoxyribonucleoside 5'-triphosphate = DNA(n+1) + diphosphate. Its function is as follows. Involved in the replication of mitochondrial DNA. The protein is DNA polymerase gamma (MIP1) of Saccharomyces cerevisiae (strain ATCC 204508 / S288c) (Baker's yeast).